Consider the following 150-residue polypeptide: Large ribosomal subunit protein uL15 (150 aa).

The disordered stretch occupies residues 1 to 57 (MTLRLESLKPNKGARRRKLRKGRGIAAGQGASCGFGMRGQKSRSGRPTRPGFEGGQM). Residues 12–23 (KGARRRKLRKGR) are compositionally biased toward basic residues. The segment covering 25 to 37 (IAAGQGASCGFGM) has biased composition (gly residues).

This sequence belongs to the universal ribosomal protein uL15 family. In terms of assembly, part of the 50S ribosomal subunit.

Binds to the 23S rRNA. In Synechococcus sp. (strain CC9311), this protein is Large ribosomal subunit protein uL15.